Consider the following 623-residue polypeptide: Kelch repeat and BTB domain-containing protein 12 (623 aa).

Positions 31–98 (IDVVLTAEGE…MYNAALEINN (68 aa)) constitute a BTB domain. The BACK domain occupies 133–235 (CLGIYYFAKQ…NPSFLRQALR (103 aa)). Kelch repeat units lie at residues 386-436 (DLYV…TVNN), 437-492 (KLYV…VVNS), 494-547 (IYVL…STNA), and 553-603 (KLYV…LVAR).

The polypeptide is Kelch repeat and BTB domain-containing protein 12 (KBTBD12) (Homo sapiens (Human)).